The following is a 129-amino-acid chain: Follitropin subunit beta (129 aa).

Residues Met-1–Cys-18 form the signal peptide. 6 disulfides stabilise this stretch: Cys-21/Cys-69, Cys-35/Cys-84, Cys-38/Cys-122, Cys-46/Cys-100, Cys-50/Cys-102, and Cys-105/Cys-112. N-linked (GlcNAc...) asparagine glycosylation is found at Asn-25 and Asn-42.

This sequence belongs to the glycoprotein hormones subunit beta family. As to quaternary structure, heterodimer. The active follitropin is a heterodimer composed of an alpha chain/CGA shared with other hormones and a unique beta chain/FSHB shown here.

The protein localises to the secreted. Its function is as follows. Together with the alpha chain CGA constitutes follitropin, the follicle-stimulating hormone, and provides its biological specificity to the hormone heterodimer. Binds FSHR, a G protein-coupled receptor, on target cells to activate downstream signaling pathways. Follitropin is involved in follicle development and spermatogenesis in reproductive organs. This chain is Follitropin subunit beta (FSHB), found in Oryctolagus cuniculus (Rabbit).